Here is a 603-residue protein sequence, read N- to C-terminus: Adenine deaminase (603 aa).

Belongs to the metallo-dependent hydrolases superfamily. Adenine deaminase family. As to quaternary structure, homodimer. Requires Mn(2+) as cofactor.

The catalysed reaction is adenine + H2O + H(+) = hypoxanthine + NH4(+). This chain is Adenine deaminase, found in Klebsiella pneumoniae subsp. pneumoniae (strain ATCC 700721 / MGH 78578).